The following is a 358-amino-acid chain: Molybdenum import ATP-binding protein ModC (358 aa).

Positions isoleucine 3–lysine 228 constitute an ABC transporter domain. Residue glycine 30 to threonine 37 participates in ATP binding. The 68-residue stretch at glutamine 289–aspartate 356 folds into the Mop domain.

It belongs to the ABC transporter superfamily. Molybdate importer (TC 3.A.1.8) family. The complex is composed of two ATP-binding proteins (ModC), two transmembrane proteins (ModB) and a solute-binding protein (ModA).

It localises to the cell inner membrane. It catalyses the reaction molybdate(out) + ATP + H2O = molybdate(in) + ADP + phosphate + H(+). Part of the ABC transporter complex ModABC involved in molybdenum import. Responsible for energy coupling to the transport system. The protein is Molybdenum import ATP-binding protein ModC of Photobacterium profundum (strain SS9).